Here is a 396-residue protein sequence, read N- to C-terminus: L-lactate dehydrogenase (396 aa).

The region spanning 1–380 (MIISAASDYR…SGDSLVQELG (380 aa)) is the FMN hydroxy acid dehydrogenase domain. A substrate-binding site is contributed by tyrosine 24. FMN contacts are provided by serine 106 and glutamine 127. Tyrosine 129 lines the substrate pocket. Residue threonine 155 coordinates FMN. Residue arginine 164 coordinates substrate. Residue lysine 251 coordinates FMN. The active-site Proton acceptor is histidine 275. Arginine 278 contacts substrate. 306-330 (DSGIRNGLDVVRMIALGADTVLLGR) provides a ligand contact to FMN.

This sequence belongs to the FMN-dependent alpha-hydroxy acid dehydrogenase family. FMN is required as a cofactor.

The protein localises to the cell inner membrane. It carries out the reaction (S)-lactate + A = pyruvate + AH2. Its function is as follows. Catalyzes the conversion of L-lactate to pyruvate. Is coupled to the respiratory chain. The protein is L-lactate dehydrogenase of Salmonella heidelberg (strain SL476).